Here is a 116-residue protein sequence, read N- to C-terminus: Protein Wnt-5b (116 aa).

A lipid anchor (O-palmitoleoyl serine; by PORCN) is attached at serine 1. N-linked (GlcNAc...) asparagine glycans are attached at residues asparagine 69 and asparagine 83. A disulfide bridge links cysteine 82 with cysteine 97.

It belongs to the Wnt family. Palmitoleoylation is required for efficient binding to frizzled receptors. Depalmitoleoylation leads to Wnt signaling pathway inhibition.

It localises to the secreted. It is found in the extracellular space. The protein localises to the extracellular matrix. Functionally, ligand for members of the frizzled family of seven transmembrane receptors. Probable developmental protein. May be a signaling molecule which affects the development of discrete regions of tissues. Is likely to signal over only few cell diameters. This Plestiodon skiltonianus (Western skink) protein is Protein Wnt-5b (WNT-5B).